A 164-amino-acid polypeptide reads, in one-letter code: V-type proton ATPase 16 kDa proteolipid subunit (164 aa).

Residues M1 to T9 are Lumenal-facing. A helical transmembrane segment spans residues A10 to G32. Over T33–S54 the chain is Cytoplasmic. The chain crosses the membrane as a helical span at residues I55–I75. The Lumenal segment spans residues S76–H94. The helical transmembrane segment at L95–G116 threads the bilayer. Over D117 to K128 the chain is Cytoplasmic. A helical membrane pass occupies residues L129–L154. The Lumenal segment spans residues S155 to E164.

The protein belongs to the V-ATPase proteolipid subunit family. V-ATPase is a heteromultimeric enzyme composed of a peripheral catalytic V1 complex (main components: subunits A, B, C, D, E, and F) attached to an integral membrane V0 proton pore complex (main component: the proteolipid protein; which is present as a hexamer that forms the proton-conducting pore).

It is found in the vacuole membrane. In terms of biological role, proton-conducting pore forming subunit of the membrane integral V0 complex of vacuolar ATPase. V-ATPase is responsible for acidifying a variety of intracellular compartments in eukaryotic cells. The sequence is that of V-type proton ATPase 16 kDa proteolipid subunit from Solanum lycopersicum (Tomato).